A 113-amino-acid chain; its full sequence is Signal peptidase complex subunit 1 (113 aa).

The Cytoplasmic portion of the chain corresponds to methionine 1–glutamine 32. A helical membrane pass occupies residues valine 33–serine 53. Over tyrosine 54–tyrosine 57 the chain is Lumenal. Residues threonine 58–phenylalanine 78 traverse the membrane as a helical segment. The Cytoplasmic segment spans residues arginine 79–lysine 113. Positions isoleucine 89–lysine 113 are disordered.

The protein belongs to the SPCS1 family. Component of the signal peptidase complex (SPC) composed of a catalytic subunit sec-11 and three accessory subunits spcs-1, spcs-2 and spcs-3. The complex induces a local thinning of the ER membrane which is used to measure the length of the signal peptide (SP) h-region of protein substrates. This ensures the selectivity of the complex towards h-regions shorter than 18-20 amino acids.

The protein localises to the endoplasmic reticulum membrane. Component of the signal peptidase complex (SPC) which catalyzes the cleavage of N-terminal signal sequences from nascent proteins as they are translocated into the lumen of the endoplasmic reticulum. Dispensable for SPC enzymatic activity. The protein is Signal peptidase complex subunit 1 of Caenorhabditis briggsae.